The sequence spans 135 residues: Retinol-binding protein 1 (135 aa).

Residues 22 to 32 (RALDVNVALRK) form an important for interaction with STRA6 region. Residues lysine 41, methionine 63, and glutamine 109 each coordinate all-trans-retinol.

It belongs to the calycin superfamily. Fatty-acid binding protein (FABP) family. In terms of assembly, interacts (only as retinol-free apoprotein) with STRA6.

Its subcellular location is the cytoplasm. The protein localises to the lipid droplet. Functionally, cytoplasmic retinol-binding protein. Accepts retinol from the transport protein STRA6, and thereby contributes to retinol uptake, storage and retinoid homeostasis. This is Retinol-binding protein 1 (RBP1) from Bos taurus (Bovine).